Consider the following 849-residue polypeptide: Putative pentatricopeptide repeat-containing protein At5g08490 (849 aa).

PPR repeat units follow at residues 20–54 (DHRV…GHIA), 55–89 (CSEV…DPVV), 121–155 (SSVT…GLEK), 156–187 (DTLV…IADK), 188–222 (DVVS…PTEP), 223–260 (NYAT…SWLQ), 262–296 (HVFV…DLVS), 297–327 (WNVV…GDVS), 329–363 (DSVT…SYLL), 365–399 (DTSV…DIIS), 400–430 (WNAI…AITL), 431–465 (DSVT…GLLH), 469–499 (EPKL…LSER), 501–531 (TLVS…MSTT), 532–566 (DLTT…GMRP), 567–597 (NTVT…IIRG), 601–631 (DIRL…DARR), 632–666 (DLVM…NIKP), 667–702 (DHVF…GMKP), and 703–733 (TMEQ…MPVE). The type E motif stretch occupies residues 738–813 (IWGTLLRACT…PAGCSWLEVD (76 aa)). Residues 814–844 (GQRNVFVSGDCSHPRRDSIFDLVNALYLQMK) form a type E(+) motif region.

Belongs to the PPR family. PCMP-E subfamily.

The polypeptide is Putative pentatricopeptide repeat-containing protein At5g08490 (PCMP-E32) (Arabidopsis thaliana (Mouse-ear cress)).